A 122-amino-acid chain; its full sequence is Large ribosomal subunit protein bL20 (122 aa).

The protein belongs to the bacterial ribosomal protein bL20 family.

Binds directly to 23S ribosomal RNA and is necessary for the in vitro assembly process of the 50S ribosomal subunit. It is not involved in the protein synthesizing functions of that subunit. The sequence is that of Large ribosomal subunit protein bL20 from Saccharopolyspora erythraea (strain ATCC 11635 / DSM 40517 / JCM 4748 / NBRC 13426 / NCIMB 8594 / NRRL 2338).